We begin with the raw amino-acid sequence, 472 residues long: Eukaryotic translation initiation factor 2 subunit 3 (472 aa).

The tr-type G domain occupies 39–247; it reads QATINIGTIG…YIVNKIPVPV (209 aa). A G1 region spans residues 48–55; it reads GHVAHGKS. 51–56 is a binding site for GTP; that stretch reads AHGKST. The interval 76 to 80 is G2; sequence NITIK. Positions 134–137 are G3; it reads DCPG. GTP is bound by residues 190 to 193 and 225 to 227; these read NKID and SAQ. Residues 190–193 form a G4 region; it reads NKID. The segment at 225–227 is G5; it reads SAQ. Residues 457-469 are interacts with cdc123; sequence GQIRRGVTITPTV.

It belongs to the TRAFAC class translation factor GTPase superfamily. Classic translation factor GTPase family. EIF2G subfamily. Eukaryotic translation initiation factor 2 eIF2 is a heterotrimeric complex composed of an alpha (EIF2S1), a beta (EIF2S2) and a gamma (EIF2S3) chain. eIF2 is member of the 43S pre-initiation complex (43S PIC).

The protein localises to the cytoplasm. It localises to the cytosol. It catalyses the reaction GTP + H2O = GDP + phosphate + H(+). Its function is as follows. Member of the eIF2 complex that functions in the early steps of protein synthesis by forming a ternary complex with GTP and initiator tRNA. This complex binds to a 40S ribosomal subunit, followed by mRNA binding to form the 43S pre-initiation complex (43S PIC). Junction of the 60S ribosomal subunit to form the 80S initiation complex is preceded by hydrolysis of the GTP bound to eIF2 and release of an eIF2-GDP binary complex. In order for eIF2 to recycle and catalyze another round of initiation, the GDP bound to eIF2 must exchange with GTP by way of a reaction catalyzed by eIF-2B. In Danio rerio (Zebrafish), this protein is Eukaryotic translation initiation factor 2 subunit 3.